The following is a 148-amino-acid chain: Pivalyl-CoA mutase small subunit (148 aa).

The region spanning 8 to 138 (PLRVLVTKIG…TALGQKSRAE (131 aa)) is the B12-binding domain. Residue His-21 coordinates adenosylcob(III)alamin.

Belongs to the acyl-CoA mutase small subunit family. In terms of assembly, monomer in the absence of the PCM large subunit. Weakly interacts with the PCM large subunit; an alpha(2)beta(2) stoichiometry seems to represent the active state of the enzyme. Adenosylcob(III)alamin is required as a cofactor.

It carries out the reaction 3-methylbutanoyl-CoA = 2,2-dimethylpropanoyl-CoA. In terms of biological role, together with Xaut_5043, catalyzes the reversible isomerization between pivalyl-CoA and isovaleryl-CoA, using radical chemistry. Does not exhibit isobutyryl-CoA mutase (ICM) activity. This Xanthobacter autotrophicus (strain ATCC BAA-1158 / Py2) protein is Pivalyl-CoA mutase small subunit.